A 250-amino-acid polypeptide reads, in one-letter code: S-adenosyl-L-methionine-dependent 2-deoxy-scyllo-inosamine dehydrogenase (250 aa).

[4Fe-4S] cluster contacts are provided by cysteine 16, cysteine 20, cysteine 23, cysteine 169, cysteine 187, and glutamate 223.

Belongs to the radical SAM superfamily. The cofactor is [4Fe-4S] cluster.

It carries out the reaction 2-deoxy-scyllo-inosamine + S-adenosyl-L-methionine = 3-amino-2,3-dideoxy-scyllo-inosose + 5'-deoxyadenosine + L-methionine + H(+). It functions in the pathway antibiotic biosynthesis; butirosin biosynthesis. Catalyzes the radical S-adenosyl-L-methionine (SAM)-dependent two-electron oxidation of 2-deoxy-scyllo-inosamine (DOIA) to amino-dideoxy-scyllo-inosose (amino-DOI) in the biosynthetic pathway of butirosin. The protein is S-adenosyl-L-methionine-dependent 2-deoxy-scyllo-inosamine dehydrogenase (btrN) of Niallia circulans (Bacillus circulans).